A 221-amino-acid polypeptide reads, in one-letter code: MWRTNQVSSRQNMAGFTLIEVLVAIAIFASLSVGAYQVLNQVQRSNEISAERTARLAELQRAMVIMDADFRQMALRQFRTDGEAPSEQILQWKESLLDSDQHGLLFVRLGWHNPQQQFPRGEVAKVGYRLFENRLERVWWRYPDTPAGQQGLISPLLTGVEDWAVQFYLQGEWSKEWVPTNALPEAVKVTLRLKDYGEIERIYLTGGGSLNMTQESVENAG.

A propeptide spans 1–15 (leader sequence); the sequence is MWRTNQVSSRQNMAG. Phenylalanine 16 carries the post-translational modification N-methylphenylalanine. Residues 16–36 form a helical membrane-spanning segment; it reads FTLIEVLVAIAIFASLSVGAY.

The protein belongs to the GSP J family. As to quaternary structure, type II secretion is composed of four main components: the outer membrane complex, the inner membrane complex, the cytoplasmic secretion ATPase and the periplasm-spanning pseudopilus. Interacts with core component epsG. Cleaved by prepilin peptidase. In terms of processing, methylated by prepilin peptidase at the amino group of the N-terminal phenylalanine once the leader sequence is cleaved by prepilin peptidase.

The protein resides in the cell inner membrane. Its function is as follows. Component of the type II secretion system required for the energy-dependent secretion of extracellular factors such as proteases and toxins from the periplasm. Part of the pseudopilus tip complex that is critical for the recognition and binding of secretion substrates. The polypeptide is Type II secretion system protein J (epsJ) (Vibrio cholerae serotype O1 (strain ATCC 39315 / El Tor Inaba N16961)).